We begin with the raw amino-acid sequence, 302 residues long: tRNA-cytidine(32) 2-sulfurtransferase (302 aa).

The PP-loop motif motif lies at 45–50 (SGGKDS). The [4Fe-4S] cluster site is built by Cys120, Cys123, and Cys211.

Belongs to the TtcA family. Homodimer. It depends on Mg(2+) as a cofactor. The cofactor is [4Fe-4S] cluster.

It localises to the cytoplasm. The enzyme catalyses cytidine(32) in tRNA + S-sulfanyl-L-cysteinyl-[cysteine desulfurase] + AH2 + ATP = 2-thiocytidine(32) in tRNA + L-cysteinyl-[cysteine desulfurase] + A + AMP + diphosphate + H(+). Its pathway is tRNA modification. Its function is as follows. Catalyzes the ATP-dependent 2-thiolation of cytidine in position 32 of tRNA, to form 2-thiocytidine (s(2)C32). The sulfur atoms are provided by the cysteine/cysteine desulfurase (IscS) system. This is tRNA-cytidine(32) 2-sulfurtransferase from Aeromonas salmonicida (strain A449).